The primary structure comprises 185 residues: Biofilm operon icaADBC HTH-type negative transcriptional regulator IcaR (185 aa).

In terms of domain architecture, HTH tetR-type spans 1 to 59 (MKDKIIDNAITLFSEKGYDGTTLDDISKSVNIKKASLYYHYDNKEEIYRKSVENCFNYF). Positions 22-41 (TLDDISKSVNIKKASLYYHY) form a DNA-binding region, H-T-H motif.

As to quaternary structure, homodimer.

Functionally, represses transcription of the icaADBC operon necessary for biofilm production. The protein is Biofilm operon icaADBC HTH-type negative transcriptional regulator IcaR (icaR) of Staphylococcus epidermidis (strain ATCC 35984 / DSM 28319 / BCRC 17069 / CCUG 31568 / BM 3577 / RP62A).